The chain runs to 276 residues: Mitochondrial distribution and morphology protein 12 (276 aa).

In terms of domain architecture, SMP-LTD spans 1 to 276; sequence MSIDIQWNLL…FVWPSYFTLY (276 aa). The tract at residues 68-104 is disordered; that stretch reads TLYSDDSSSLDDEESDREEENMTELPPYGATENGVHK. The span at 75-89 shows a compositional bias: acidic residues; the sequence is SSLDDEESDREEENM.

It belongs to the MDM12 family. As to quaternary structure, component of the ER-mitochondria encounter structure (ERMES) or MDM complex, composed of mmm1, mdm10, mdm12 and mdm34. A mmm1 homodimer associates with one molecule of mdm12 on each side in a pairwise head-to-tail manner, and the SMP-LTD domains of mmm1 and mdm12 generate a continuous hydrophobic tunnel for phospholipid trafficking.

Its subcellular location is the mitochondrion outer membrane. It localises to the endoplasmic reticulum membrane. Component of the ERMES/MDM complex, which serves as a molecular tether to connect the endoplasmic reticulum (ER) and mitochondria. Components of this complex are involved in the control of mitochondrial shape and protein biogenesis, and function in nonvesicular lipid trafficking between the ER and mitochondria. Mdm12 is required for the interaction of the ER-resident membrane protein mmm1 and the outer mitochondrial membrane-resident beta-barrel protein mdm10. The mdm12-mmm1 subcomplex functions in the major beta-barrel assembly pathway that is responsible for biogenesis of all mitochondrial outer membrane beta-barrel proteins, and acts in a late step after the SAM complex. The mdm10-mdm12-mmm1 subcomplex further acts in the TOM40-specific pathway after the action of the mdm12-mmm1 complex. Essential for establishing and maintaining the structure of mitochondria and maintenance of mtDNA nucleoids. In Schizosaccharomyces japonicus (strain yFS275 / FY16936) (Fission yeast), this protein is Mitochondrial distribution and morphology protein 12.